Consider the following 430-residue polypeptide: Dynactin subunit 2 (430 aa).

2 disordered regions span residues 1 to 51 and 201 to 228; these read MSEG…IDRS and SLSS…SSSS. Polar residues predominate over residues 32-44; sequence SISNLADESSELV. 2 coiled-coil regions span residues 241–319 and 397–430; these read TGEQ…QDET and DDSF…QQQQ.

It belongs to the dynactin subunit 2 family. In terms of assembly, subunit of dynactin, a multiprotein complex associated with dynein.

It localises to the cytoplasm. Its subcellular location is the cytoskeleton. It is found in the membrane. Modulates cytoplasmic dynein binding to an organelle, and plays a role in prometaphase chromosome alignment and spindle organization during mitosis. This chain is Dynactin subunit 2 (dynB), found in Dictyostelium discoideum (Social amoeba).